The primary structure comprises 349 residues: UDP-3-O-acylglucosamine N-acyltransferase (349 aa).

The active-site Proton acceptor is histidine 246.

This sequence belongs to the transferase hexapeptide repeat family. LpxD subfamily. As to quaternary structure, homotrimer.

The enzyme catalyses a UDP-3-O-[(3R)-3-hydroxyacyl]-alpha-D-glucosamine + a (3R)-hydroxyacyl-[ACP] = a UDP-2-N,3-O-bis[(3R)-3-hydroxyacyl]-alpha-D-glucosamine + holo-[ACP] + H(+). Its pathway is bacterial outer membrane biogenesis; LPS lipid A biosynthesis. Functionally, catalyzes the N-acylation of UDP-3-O-acylglucosamine using 3-hydroxyacyl-ACP as the acyl donor. Is involved in the biosynthesis of lipid A, a phosphorylated glycolipid that anchors the lipopolysaccharide to the outer membrane of the cell. The chain is UDP-3-O-acylglucosamine N-acyltransferase from Trichormus variabilis (strain ATCC 29413 / PCC 7937) (Anabaena variabilis).